A 234-amino-acid polypeptide reads, in one-letter code: Octanoyltransferase (234 aa).

One can recognise a BPL/LPL catalytic domain in the interval 42 to 226 (PDTPDEFWVV…ELASLIGYET (185 aa)). Substrate-binding positions include 81-88 (RGGQVTYH), 157-159 (SLG), and 170-172 (GLA). Residue cysteine 188 is the Acyl-thioester intermediate of the active site.

The protein belongs to the LipB family.

The protein localises to the cytoplasm. It carries out the reaction octanoyl-[ACP] + L-lysyl-[protein] = N(6)-octanoyl-L-lysyl-[protein] + holo-[ACP] + H(+). Its pathway is protein modification; protein lipoylation via endogenous pathway; protein N(6)-(lipoyl)lysine from octanoyl-[acyl-carrier-protein]: step 1/2. Catalyzes the transfer of endogenously produced octanoic acid from octanoyl-acyl-carrier-protein onto the lipoyl domains of lipoate-dependent enzymes. Lipoyl-ACP can also act as a substrate although octanoyl-ACP is likely to be the physiological substrate. The chain is Octanoyltransferase from Aeromonas hydrophila subsp. hydrophila (strain ATCC 7966 / DSM 30187 / BCRC 13018 / CCUG 14551 / JCM 1027 / KCTC 2358 / NCIMB 9240 / NCTC 8049).